Consider the following 630-residue polypeptide: MEAKETHSISDHEVELQDAKPEEKSENGNFVFEKAFSSDEEKGSGYNTNETYSKMDNSLQHRGVSKIEAVRDSIYQNKRGMYLAYAFGIAILACSWASAIQSSTTYSYQVYATASFNRTSMISTLEIATAIISSVCKPILGKFSDITSRPMTYTLVLLFYVIGFIVVASSSTISAYVIGSVFISIGSSGLDYLNTLVVGDLTSLKWRGFMTALLSTPYIATVWFTGFIVQGIIDSNWRWGYGMFAIIMPAVMTPAVIILMYLERQANKDENIKKIINYQTEEKNKNKQSKWQKLWKAVLEVDLFGLILLGVGWSILLLPFSLTSYAKNGWKNPSMIAMMVVGGVILIAYSGYEMFIAPYPSCPRRVMNRTFITAVIIDFFYYLAGYLQSMYFTTYTWILYDWSYRDWTYFNNTMTIALCVFGVFAGAMHRVFHRYKYLQIIGLVIKIVGYGILIRPNFAATGKVDLAWSLILIGMGGSFSVVGSQVSCQASVPHQDLAIASSLLPLYTNIGGAIGAAIASPIFSNKVPKYLREYLPSSINDTQVYNFYSDSSLIREYPVGTEIRDGAIKAYSRSMFFLLVPAVSLSFIPLAAAFWQSNFYLGNQQNAVEGDQDHKKKGDKETTQEEKIII.

Residues Met1 to Glu26 show a composition bias toward basic and acidic residues. Residues Met1–Thr51 are disordered. Residues Met1–Arg79 are Cytoplasmic-facing. Phosphoserine occurs at positions 10 and 38. The helical transmembrane segment at Gly80–Ile100 threads the bilayer. The Extracellular portion of the chain corresponds to Gln101 to Ser120. The chain crosses the membrane as a helical span at residues Met121–Gly141. The Cytoplasmic portion of the chain corresponds to Lys142–Thr154. Residues Leu155–Ala175 traverse the membrane as a helical segment. A topological domain (extracellular) is located at residue Tyr176. A helical transmembrane segment spans residues Val177–Val197. Residues Val198–Gly208 are Cytoplasmic-facing. Residues Phe209–Val229 traverse the membrane as a helical segment. Over Gln230–Tyr241 the chain is Extracellular. A helical membrane pass occupies residues Gly242 to Leu262. Residues Glu263–Asp302 are Cytoplasmic-facing. Residues Leu303–Thr323 traverse the membrane as a helical segment. Residues Ser324–Met335 lie on the Extracellular side of the membrane. The chain crosses the membrane as a helical span at residues Ile336–Ile356. Residues Ala357–Thr370 lie on the Cytoplasmic side of the membrane. Residues Phe371 to Tyr391 traverse the membrane as a helical segment. Residues Phe392 to Asp406 lie on the Extracellular side of the membrane. A helical membrane pass occupies residues Trp407–Ala427. The Cytoplasmic segment spans residues Met428–Gln439. Residues Ile440–Ala460 traverse the membrane as a helical segment. The Extracellular segment spans residues Thr461–Asp465. Residues Leu466–Val486 traverse the membrane as a helical segment. At Ser487–Ser502 the chain is on the cytoplasmic side. A helical transmembrane segment spans residues Leu503 to Phe523. The heme binding stretch occupies residues Ile522–Phe576. Over Ser524–Ser574 the chain is Extracellular. A helical transmembrane segment spans residues Met575–Trp595. Over Gln596 to Ile630 the chain is Cytoplasmic. Residues Gly610–Ile630 form a disordered region. Basic and acidic residues predominate over residues Asp611–Ile630.

It belongs to the major facilitator superfamily.

The protein resides in the cell membrane. Functionally, low affinity heme transporter involved in the assimilation of exogenous heme during conditions of low cellular iron. The polypeptide is Low affinity heme transporter str3 (Schizosaccharomyces pombe (strain 972 / ATCC 24843) (Fission yeast)).